The sequence spans 785 residues: Protein kintoun (785 aa).

2 stretches are compositionally biased toward basic and acidic residues: residues glutamate 622 to serine 638 and histidine 662 to lysine 679. Disordered stretches follow at residues glutamate 622–leucine 698 and lysine 719–asparagine 749. Residues threonine 681–aspartate 695 are compositionally biased toward polar residues. Residues serine 728–aspartate 737 show a composition bias toward acidic residues.

It belongs to the PIH1 family. Kintoun subfamily.

It is found in the cytoplasm. The protein resides in the dynein axonemal particle. In terms of biological role, required for cytoplasmic pre-assembly of axonemal dyneins, thereby playing a central role in motility in cilia and flagella. Involved in pre-assembly of dynein arm complexes in the cytoplasm before intraflagellar transport loads them for the ciliary compartment. This is Protein kintoun from Xenopus tropicalis (Western clawed frog).